The sequence spans 206 residues: Oligoribonuclease (206 aa).

The 164-residue stretch at 20–183 folds into the Exonuclease domain; that stretch reads LVWLDMEMTG…ADIHESIDEL (164 aa). Residue Y141 is part of the active site.

The protein belongs to the oligoribonuclease family.

Its subcellular location is the cytoplasm. 3'-to-5' exoribonuclease specific for small oligoribonucleotides. The polypeptide is Oligoribonuclease (Burkholderia ambifaria (strain ATCC BAA-244 / DSM 16087 / CCUG 44356 / LMG 19182 / AMMD) (Burkholderia cepacia (strain AMMD))).